A 387-amino-acid polypeptide reads, in one-letter code: Ferrochelatase (387 aa).

H196 and E277 together coordinate Fe cation.

This sequence belongs to the ferrochelatase family.

The protein resides in the cytoplasm. It catalyses the reaction heme b + 2 H(+) = protoporphyrin IX + Fe(2+). It functions in the pathway porphyrin-containing compound metabolism; protoheme biosynthesis; protoheme from protoporphyrin-IX: step 1/1. Catalyzes the ferrous insertion into protoporphyrin IX. The sequence is that of Ferrochelatase from Trichodesmium erythraeum (strain IMS101).